Here is a 942-residue protein sequence, read N- to C-terminus: Zinc finger protein 865 (942 aa).

The disordered stretch occupies residues 66-106 (FASTSTSKPKEFKVEAPPSSSLSPSKKPDIATTQQFNNQPP). Residues 96–106 (ATTQQFNNQPP) show a composition bias toward polar residues. 20 C2H2-type zinc fingers span residues 172 to 194 (FPCTVCQKSFKQSSHLVQHMLVH), 200 to 222 (YECNTCGRTYNHISSLIRHRRCH), 282 to 304 (FTCTLCWKVFKKQSHLHQHQIIH), 310 to 332 (FSCSVCAKSFNRRESLKRHVKTH), 338 to 360 (VQCEVCGKSFRDTSYLLKHQATH), 367 to 389 (YKCELCGKSYAAPQSLLRHKQVH), 466 to 488 (FCCNVCGRGFGRRETLKRHERIH), 494 to 516 (HQCSVCGKRFRESFHLTKHHVVH), 522 to 544 (YKCELCGKVFGYPQSLTRHKQIH), 564 to 586 (FGCTDCGERFPDSFHLMNHKELH), 592 to 614 (YVCDTCGKCFGFIENLMWHKLVH), 678 to 700 (FSCSICGQSFKHFLGLVTHKYVH), 706 to 728 (LACNVCGQNFAGAYDLLLHRRTH), 734 to 756 (FTCSVCGKRFWEAALLMRHQRCH), 762 to 784 (YRCTICGRGFLHSWYLRQHKVVH), 790 to 812 (YKCALCNKRFAQSSSLAEHQRLH), 818 to 840 (QRCPTCGKTFRYRSNLLEHQRVH), 846 to 868 (YRCDQCGKSFFYISSILRHQRSH), 874 to 896 (LRCSCCLKLFKDPKYFSKHVQTH), and 902 to 924 (FKCGACGEAFSNTYGLKKHRHAH).

It belongs to the krueppel C2H2-type zinc-finger protein family.

Its subcellular location is the nucleus. Functionally, may be involved in transcriptional regulation. The sequence is that of Zinc finger protein 865 (znf865) from Xenopus tropicalis (Western clawed frog).